A 485-amino-acid polypeptide reads, in one-letter code: Glycogen synthase (485 aa).

Lys20 contacts ADP-alpha-D-glucose.

It belongs to the glycosyltransferase 1 family. Bacterial/plant glycogen synthase subfamily.

The catalysed reaction is [(1-&gt;4)-alpha-D-glucosyl](n) + ADP-alpha-D-glucose = [(1-&gt;4)-alpha-D-glucosyl](n+1) + ADP + H(+). Its pathway is glycan biosynthesis; glycogen biosynthesis. Synthesizes alpha-1,4-glucan chains using ADP-glucose. The protein is Glycogen synthase of Vibrio parahaemolyticus serotype O3:K6 (strain RIMD 2210633).